We begin with the raw amino-acid sequence, 378 residues long: tRNA-specific 2-thiouridylase MnmA (378 aa).

ATP contacts are provided by residues 7-14 and Met33; that span reads GLSGGVDS. The tract at residues 102 to 104 is interaction with target base in tRNA; it reads NPD. The active-site Nucleophile is the Cys107. A disulfide bridge links Cys107 with Cys209. Gly132 contacts ATP. The interval 159-161 is interaction with tRNA; sequence KDQ. Cys209 functions as the Cysteine persulfide intermediate in the catalytic mechanism. The tract at residues 316 to 317 is interaction with tRNA; sequence RY.

It belongs to the MnmA/TRMU family.

Its subcellular location is the cytoplasm. It carries out the reaction S-sulfanyl-L-cysteinyl-[protein] + uridine(34) in tRNA + AH2 + ATP = 2-thiouridine(34) in tRNA + L-cysteinyl-[protein] + A + AMP + diphosphate + H(+). Its function is as follows. Catalyzes the 2-thiolation of uridine at the wobble position (U34) of tRNA, leading to the formation of s(2)U34. The polypeptide is tRNA-specific 2-thiouridylase MnmA (Aster yellows witches'-broom phytoplasma (strain AYWB)).